The following is a 341-amino-acid chain: tRNA N6-adenosine threonylcarbamoyltransferase (341 aa).

The Fe cation site is built by His111 and His115. Residues 134 to 138 (LVSGG), Asp167, Gly180, and Asn274 contribute to the substrate site. Asp302 serves as a coordination point for Fe cation.

This sequence belongs to the KAE1 / TsaD family. It depends on Fe(2+) as a cofactor.

The protein localises to the cytoplasm. It carries out the reaction L-threonylcarbamoyladenylate + adenosine(37) in tRNA = N(6)-L-threonylcarbamoyladenosine(37) in tRNA + AMP + H(+). In terms of biological role, required for the formation of a threonylcarbamoyl group on adenosine at position 37 (t(6)A37) in tRNAs that read codons beginning with adenine. Is involved in the transfer of the threonylcarbamoyl moiety of threonylcarbamoyl-AMP (TC-AMP) to the N6 group of A37, together with TsaE and TsaB. TsaD likely plays a direct catalytic role in this reaction. This is tRNA N6-adenosine threonylcarbamoyltransferase from Paraburkholderia phymatum (strain DSM 17167 / CIP 108236 / LMG 21445 / STM815) (Burkholderia phymatum).